Consider the following 353-residue polypeptide: Methylamine utilization protein MauG (353 aa).

An N-terminal signal peptide occupies residues 1 to 23; sequence MRAILPIPVLIAWAMVVCGGAYA. Residues Cys-88, Cys-91, His-92, Cys-234, Cys-237, His-238, and His-292 each coordinate heme c.

Binds 2 heme c groups covalently per subunit.

Its subcellular location is the periplasm. Its pathway is one-carbon metabolism; methylamine degradation. Functionally, involved in methylamine metabolism. Essential for the maturation of the beta subunit of MADH, presumably via a step in the biosynthesis of tryptophan tryptophylquinone (TTQ), the cofactor of MADH. This is Methylamine utilization protein MauG (mauG) from Methylorubrum extorquens (strain ATCC 14718 / DSM 1338 / JCM 2805 / NCIMB 9133 / AM1) (Methylobacterium extorquens).